A 130-amino-acid chain; its full sequence is Small ribosomal subunit protein uS9 (130 aa).

Positions 107 to 130 are disordered; it reads DSREVERKKVGLRKARRRPQFSKR. The span at 116–130 shows a compositional bias: basic residues; sequence VGLRKARRRPQFSKR.

Belongs to the universal ribosomal protein uS9 family.

This Marinomonas sp. (strain MWYL1) protein is Small ribosomal subunit protein uS9.